We begin with the raw amino-acid sequence, 759 residues long: Subtilisin-like protease SBT3.10 (759 aa).

The signal sequence occupies residues 1–25 (MSKTIILLAFFLSIVLNVQISFVVA). Positions 26-108 (ESKVYVVYLG…VIPNTLYEMT (83 aa)) are cleaved as a propeptide — activation peptide. An Inhibitor I9 domain is found at 29–106 (VYVVYLGEKE…VQVIPNTLYE (78 aa)). The region spanning 112 to 606 (TWDYLGVSPG…GGLINPEKAV (495 aa)) is the Peptidase S8 domain. Catalysis depends on aspartate 142, which acts as the Charge relay system. N-linked (GlcNAc...) asparagine glycosylation is found at asparagine 175 and asparagine 202. Histidine 218 functions as the Charge relay system in the catalytic mechanism. N-linked (GlcNAc...) asparagine glycans are attached at residues asparagine 233 and asparagine 361. The PA domain maps to 390–464 (DCEKLSANPK…ELGTDILFYI (75 aa)). Catalysis depends on serine 537, which acts as the Charge relay system.

It belongs to the peptidase S8 family.

The protein resides in the secreted. In Arabidopsis thaliana (Mouse-ear cress), this protein is Subtilisin-like protease SBT3.10.